Consider the following 152-residue polypeptide: MLCPFCNHGELKVIDSRNSPEANAIKRRRECLRCSQRFTTFETVELTIQVLKRDGRYENFQEAKLINGLKAASSHTRIGQEQVQAIASNIKQDLLGKQNREISTKEIGELVMKYLKKADMIAYIRFACVYRRFRDVGELMEVLLSATPDGEK.

A zinc finger lies at 3–34 (CPFCNHGELKVIDSRNSPEANAIKRRRECLRC). Residues 48–138 (IQVLKRDGRY…VYRRFRDVGE (91 aa)) form the ATP-cone domain.

This sequence belongs to the NrdR family. It depends on Zn(2+) as a cofactor.

Functionally, negatively regulates transcription of bacterial ribonucleotide reductase nrd genes and operons by binding to NrdR-boxes. This chain is Transcriptional repressor NrdR, found in Chlamydia muridarum (strain MoPn / Nigg).